Consider the following 82-residue polypeptide: RNA-binding protein Hfq (82 aa).

The Sm domain occupies 9–69 (DHFLNQLRKE…ISTFSPARNV (61 aa)).

This sequence belongs to the Hfq family. Homohexamer.

Its function is as follows. RNA chaperone that binds small regulatory RNA (sRNAs) and mRNAs to facilitate mRNA translational regulation in response to envelope stress, environmental stress and changes in metabolite concentrations. Also binds with high specificity to tRNAs. The protein is RNA-binding protein Hfq of Exiguobacterium sp. (strain ATCC BAA-1283 / AT1b).